The primary structure comprises 552 residues: AP-1-like transcription factor (552 aa).

The segment covering 1-14 has biased composition (polar residues); it reads MSGQTETLSSTSNI. Positions 1 to 99 are disordered; sequence MSGQTETLSS…QRAFRKRKED (99 aa). A compositionally biased stretch (basic and acidic residues) spans 36–47; sequence PVSDRSSRRTSS. Over residues 48 to 61 the composition is skewed to acidic residues; the sequence is EEVDLMPNVDDEVD. The segment covering 62-80 has biased composition (basic and acidic residues); it reads GDVKPKKIGRKNSDQEPSS. Positions 76 to 139 constitute a bZIP domain; sequence QEPSSKRKAQ…RQLEEELRIL (64 aa). Residues 81–88 carry the Nuclear localization signal motif; it reads KRKAQNRA. Residues 81–102 are basic motif; the sequence is KRKAQNRAAQRAFRKRKEDHLK. The leucine-zipper stretch occupies residues 104–111; the sequence is LETQVVTL. Positions 213-244 are disordered; it reads QVPPTLVDSNSAQGTLSPETPSSSDSPSNLYL. Residues 219–228 are compositionally biased toward polar residues; the sequence is VDSNSAQGTL. Low complexity predominate over residues 229–240; sequence SPETPSSSDSPS. Positions 259 to 290 are n-CRD; it reads CSALSNGENGEDVADGKQFCQKLSTACGSIAC. Intrachain disulfides connect C278/C501 and C285/C532. A disordered region spans residues 460–489; it reads ISNHPDEVPPDGLPQKGKHDTSSQMPSENE. The interval 501–532 is c-CRD; it reads CPKVWSKIINHPRFESFDIDDLCSKLKNKAKC. A Nuclear export signal motif is present at residues 515-533; the sequence is ESFDIDDLCSKLKNKAKCS.

This sequence belongs to the bZIP family. YAP subfamily. Homodimer. The reduced form of pap1 interacts in the nucleus with the nuclear export protein crm1, and in the cytoplasm with the peroxiredoxin tpx1. Depending on the oxidative stress inducing agent, pap1 can undergo two distinct conformational changes, both masking the nuclear export signal, thus abolishing nuclear export by crm1/exportin 1. The glutathione-depleting agent diethylmaleate (DEM) leads to the non-reversible modification of at least 2 cysteine residues in the c-CRD. Peroxide stress induces the formation of a tpx1-dependent interdomain disulfide bond between Cys-278 and Cys-501.

The protein localises to the nucleus. The protein resides in the cytoplasm. Transcription activator involved in multidrug resistance, oxidative stress response, and redox homeostasis. Regulates the transcription of genes encoding antioxidant enzymes like catalase ctt1 and components of the cellular thiol-reducing pathways, including the thioredoxin system (trx2, trr1), ABC transporters involved in multidrug resistance like bfr1/hba2 and pmd1 as well as the gene obr1/apt1. Preferentially binds to promoters with the core binding site 5'-TTA[CG]TAA-3'. Activity of the transcription factor is controlled through oxidation of specific cysteine residues resulting in the alteration of its subcellular location. Oxidative stress induces nuclear accumulation and as a result pap1 transcriptional activity. Required for sty1/spc1-conferred staurosporine resistance. The chain is AP-1-like transcription factor (pap1) from Schizosaccharomyces pombe (strain 972 / ATCC 24843) (Fission yeast).